A 147-amino-acid polypeptide reads, in one-letter code: Large ribosomal subunit protein uL15 (147 aa).

Residues 16 to 63 are disordered; the sequence is SSRARVGRGIGSGLGKTAGRGHKGSFARKGGGKIKPGFEGGQTPMQRR. The segment covering 23-33 has biased composition (gly residues); sequence RGIGSGLGKTA. Residues 34–47 are compositionally biased toward basic residues; the sequence is GRGHKGSFARKGGG.

Belongs to the universal ribosomal protein uL15 family. As to quaternary structure, part of the 50S ribosomal subunit.

In terms of biological role, binds to the 23S rRNA. The chain is Large ribosomal subunit protein uL15 from Xylella fastidiosa (strain Temecula1 / ATCC 700964).